The primary structure comprises 185 residues: Pyridoxal 5'-phosphate synthase subunit PdxT (185 aa).

Gly46–Ser48 serves as a coordination point for L-glutamine. The active-site Nucleophile is Cys75. L-glutamine-binding positions include Arg101 and Ile129–Arg130. Active-site charge relay system residues include His165 and Glu167.

The protein belongs to the glutaminase PdxT/SNO family. As to quaternary structure, in the presence of PdxS, forms a dodecamer of heterodimers. Only shows activity in the heterodimer.

The catalysed reaction is aldehydo-D-ribose 5-phosphate + D-glyceraldehyde 3-phosphate + L-glutamine = pyridoxal 5'-phosphate + L-glutamate + phosphate + 3 H2O + H(+). It catalyses the reaction L-glutamine + H2O = L-glutamate + NH4(+). The protein operates within cofactor biosynthesis; pyridoxal 5'-phosphate biosynthesis. Catalyzes the hydrolysis of glutamine to glutamate and ammonia as part of the biosynthesis of pyridoxal 5'-phosphate. The resulting ammonia molecule is channeled to the active site of PdxS. The sequence is that of Pyridoxal 5'-phosphate synthase subunit PdxT from Staphylococcus epidermidis (strain ATCC 12228 / FDA PCI 1200).